Here is a 210-residue protein sequence, read N- to C-terminus: uncharacterized protein (210 aa).

The next 4 membrane-spanning stretches (helical) occupy residues 5–25 (LAYI…TMLV), 50–70 (FWTV…VILF), 75–95 (YLGA…KSMF), and 155–175 (IILA…LVYI).

The protein belongs to the Rht family.

It is found in the cell membrane. This is an uncharacterized protein from Bacillus subtilis (strain 168).